Reading from the N-terminus, the 528-residue chain is Benzoylformate decarboxylase (528 aa).

Residues asparagine 117, leucine 118, and arginine 120 each contribute to the Mg(2+) site. Residues threonine 377–alanine 460 are thiamine pyrophosphate binding. The Ca(2+) site is built by aspartate 428, asparagine 455, and threonine 457.

The protein belongs to the TPP enzyme family. As to quaternary structure, homotetramer. Requires Ca(2+) as cofactor. Thiamine diphosphate serves as cofactor. Mg(2+) is required as a cofactor.

The enzyme catalyses phenylglyoxylate + H(+) = benzaldehyde + CO2. The protein operates within aromatic compound metabolism; (R)-mandelate degradation; benzoate from (R)-mandelate: step 3/4. The polypeptide is Benzoylformate decarboxylase (mdlC) (Pseudomonas putida (Arthrobacter siderocapsulatus)).